Reading from the N-terminus, the 397-residue chain is Elongation factor Tu (397 aa).

One can recognise a tr-type G domain in the interval 10-207 (KPHCNIGTIG…AVDEWIPQPE (198 aa)). Positions 19-26 (GHVDHGKT) are G1. 19-26 (GHVDHGKT) contributes to the GTP binding site. Thr26 provides a ligand contact to Mg(2+). Positions 61–65 (GITIS) are G2. The tract at residues 82–85 (DCPG) is G3. Residues 82–86 (DCPGH) and 137–140 (NKVD) each bind GTP. The G4 stretch occupies residues 137 to 140 (NKVD). Positions 175–177 (SAL) are G5.

Belongs to the TRAFAC class translation factor GTPase superfamily. Classic translation factor GTPase family. EF-Tu/EF-1A subfamily. In terms of assembly, monomer.

The protein resides in the cytoplasm. It carries out the reaction GTP + H2O = GDP + phosphate + H(+). GTP hydrolase that promotes the GTP-dependent binding of aminoacyl-tRNA to the A-site of ribosomes during protein biosynthesis. The sequence is that of Elongation factor Tu from Sphingopyxis alaskensis (strain DSM 13593 / LMG 18877 / RB2256) (Sphingomonas alaskensis).